Here is a 704-residue protein sequence, read N- to C-terminus: Ion-translocating oxidoreductase complex subunit C (704 aa).

4Fe-4S ferredoxin-type domains lie at 368–397 (MGAP…QQLY) and 407–436 (KATA…VQYF). The [4Fe-4S] cluster site is built by C377, C380, C383, C387, C416, C419, C422, and C426. The interval 536-684 (RAKQAAHPMA…PADPRKAAVA (149 aa)) is disordered. Low complexity predominate over residues 556–565 (KAAVEAAIAR).

It belongs to the 4Fe4S bacterial-type ferredoxin family. RnfC subfamily. The complex is composed of six subunits: RsxA, RsxB, RsxC, RsxD, RsxE and RsxG. The cofactor is [4Fe-4S] cluster.

Its subcellular location is the cell inner membrane. Its function is as follows. Part of a membrane-bound complex that couples electron transfer with translocation of ions across the membrane. Required to maintain the reduced state of SoxR. The sequence is that of Ion-translocating oxidoreductase complex subunit C from Salmonella choleraesuis (strain SC-B67).